The chain runs to 135 residues: Basic phospholipase A2 KBf-VA (135 aa).

Cystine bridges form between cysteine 28–cysteine 87, cysteine 42–cysteine 134, cysteine 44–cysteine 60, cysteine 59–cysteine 115, cysteine 66–cysteine 108, cysteine 76–cysteine 101, and cysteine 94–cysteine 106. Residues tyrosine 43, glycine 45, and glycine 47 each contribute to the Ca(2+) site. The active site involves histidine 63. Aspartate 64 serves as a coordination point for Ca(2+). Residue aspartate 109 is part of the active site.

It belongs to the phospholipase A2 family. Group I subfamily. D49 sub-subfamily. Ca(2+) serves as cofactor. As to expression, expressed by the venom gland.

It localises to the secreted. It carries out the reaction a 1,2-diacyl-sn-glycero-3-phosphocholine + H2O = a 1-acyl-sn-glycero-3-phosphocholine + a fatty acid + H(+). In terms of biological role, snake venom phospholipase A2 (PLA2) that inhibits neuromuscular transmission by blocking acetylcholine release from the nerve termini. PLA2 catalyzes the calcium-dependent hydrolysis of the 2-acyl groups in 3-sn-phosphoglycerides. The chain is Basic phospholipase A2 KBf-VA from Bungarus fasciatus (Banded krait).